Consider the following 382-residue polypeptide: RNA binding protein fox-1 homolog 1-like (382 aa).

Disordered stretches follow at residues 34 to 79 (QEAG…AAHP) and 94 to 148 (GPQH…QPKR). The segment covering 49 to 65 (YAPPPSYPPPGQAPPTP) has biased composition (pro residues). Over residues 101 to 110 (ESITASNTDD) the composition is skewed to polar residues. The 77-residue stretch at 147-223 (KRLHVSNIPF…RKIEVNNATA (77 aa)) folds into the RRM domain.

In terms of tissue distribution, expressed during muscle development in adaxial cells, somites, cardiac precursors, finbuds and jaw muscle cells.

The protein resides in the nucleus. In terms of biological role, RNA-binding protein that regulates alternative splicing events by binding to 5'-GCAUG-3' elements. Regulates alternative splicing of tissue-specific exons. This is RNA binding protein fox-1 homolog 1-like (rbfox1l) from Danio rerio (Zebrafish).